The sequence spans 150 residues: Globin-2 A chain (150 aa).

Val2 is modified (blocked amino end (Val)). The region spanning 10–150 is the Globin domain; it reads CGSEAIKANL…ALVGVVQAAL (141 aa). His102 provides a ligand contact to heme b.

This sequence belongs to the globin family. In terms of assembly, heterotetramer of two alpha chains and two beta chains.

This Anadara inaequivalvis (Inequivalve ark) protein is Globin-2 A chain.